A 261-amino-acid polypeptide reads, in one-letter code: High-affinity zinc uptake system membrane protein ZnuB (261 aa).

The next 7 membrane-spanning stretches (helical) occupy residues 8 to 28 (ALLT…FVVW), 54 to 74 (VNPY…MVWL), 84 to 104 (TLLG…VGLL), 125 to 145 (TDLI…IYFW), 171 to 191 (ILMI…GALI), 214 to 234 (VGWA…LSAF), and 236 to 256 (DTAA…LSLF).

It belongs to the ABC-3 integral membrane protein family.

The protein resides in the cell inner membrane. Its function is as follows. Involved in the high-affinity zinc uptake transport system. In Haemophilus influenzae (strain ATCC 51907 / DSM 11121 / KW20 / Rd), this protein is High-affinity zinc uptake system membrane protein ZnuB (znuB).